Consider the following 583-residue polypeptide: MRTSQFPLNTLKEIPSDAEIVSHQLMLRAGLIRKLAAGLYTWLPLGLKVLRRVERVVREEMDRAGALEVLMPVVQPAELWQESGRWEQYGPELARLHDRHDRAFCLGPTHEEIITDLARNELKSYRQLPVNFYQIQTKFRDEIRPRFGVMRAREFVMKDAYSFHLDQESLAQTYDAMYVAYSNIFSRLGLRFRPVLADTGAIGGSHSHEFHVLADSGEDAIAFSTVSDYAANVEQAEALAPTAPRPAPTAALLKVETPGKKSIAEVSEFLGVPPHQILKTVAVMQTIVDDDGLDRDMFVTVLLRGDHELNEVKLGKVLGRFRFASEDEIERHMGCRPGYIGPLNLPAGTAVGPVYADRAVAVMSDFVCGANEAGYHFSGVNWERDLPLPQDEYLCDLRNVVEGDPSPDGLGTLRIARGIEVGHIFQLGTKYSAALNATVLNEEGRSQVMLMGCYGIGVSRVVAAAIEQNHDERGIVWPEALAPFQVALCPINMQTSARVRTTAERLYAELSAAGFEVLYDDRKVRPGVMFADMELIGIPHRIVISERGLDSGALEYKGRRDADNQSIGIDGVIEFLRERSESR.

It belongs to the class-II aminoacyl-tRNA synthetase family. ProS type 1 subfamily. Homodimer.

The protein resides in the cytoplasm. The enzyme catalyses tRNA(Pro) + L-proline + ATP = L-prolyl-tRNA(Pro) + AMP + diphosphate. In terms of biological role, catalyzes the attachment of proline to tRNA(Pro) in a two-step reaction: proline is first activated by ATP to form Pro-AMP and then transferred to the acceptor end of tRNA(Pro). As ProRS can inadvertently accommodate and process non-cognate amino acids such as alanine and cysteine, to avoid such errors it has two additional distinct editing activities against alanine. One activity is designated as 'pretransfer' editing and involves the tRNA(Pro)-independent hydrolysis of activated Ala-AMP. The other activity is designated 'posttransfer' editing and involves deacylation of mischarged Ala-tRNA(Pro). The misacylated Cys-tRNA(Pro) is not edited by ProRS. In Methylococcus capsulatus (strain ATCC 33009 / NCIMB 11132 / Bath), this protein is Proline--tRNA ligase.